The chain runs to 199 residues: Protein-methionine-sulfoxide reductase heme-binding subunit MsrQ (199 aa).

The next 4 helical transmembrane spans lie at 10-30, 82-102, 116-136, and 153-173; these read WLKVCLHLAGFLPLLWLFWAI, LWCFVWATLHLTSYALLELGI, PYLTLGIISWLVLLALTLTST, and VVYLVAILAPIHYLWSVKILS.

The protein belongs to the MsrQ family. In terms of assembly, heterodimer of a catalytic subunit (MsrP) and a heme-binding subunit (MsrQ). Requires FMN as cofactor. Heme b serves as cofactor.

Its subcellular location is the cell inner membrane. Functionally, part of the MsrPQ system that repairs oxidized periplasmic proteins containing methionine sulfoxide residues (Met-O), using respiratory chain electrons. Thus protects these proteins from oxidative-stress damage caused by reactive species of oxygen and chlorine generated by the host defense mechanisms. MsrPQ is essential for the maintenance of envelope integrity under bleach stress, rescuing a wide series of structurally unrelated periplasmic proteins from methionine oxidation, including the primary periplasmic chaperone SurA and the lipoprotein Pal. MsrQ provides electrons for reduction to the reductase catalytic subunit MsrP, using the quinone pool of the respiratory chain. The sequence is that of Protein-methionine-sulfoxide reductase heme-binding subunit MsrQ from Salmonella newport (strain SL254).